The primary structure comprises 87 residues: uncharacterized protein (87 aa).

The chain crosses the membrane as a helical span at residues 21–41 (LSSSLYSVAFFLFFFPNFLFF).

It localises to the membrane. This is an uncharacterized protein from Saccharomyces cerevisiae (strain ATCC 204508 / S288c) (Baker's yeast).